Consider the following 101-residue polypeptide: Small ribosomal subunit protein uS14 (101 aa).

Belongs to the universal ribosomal protein uS14 family. In terms of assembly, part of the 30S ribosomal subunit. Contacts proteins S3 and S10.

Functionally, binds 16S rRNA, required for the assembly of 30S particles and may also be responsible for determining the conformation of the 16S rRNA at the A site. In Ruegeria sp. (strain TM1040) (Silicibacter sp.), this protein is Small ribosomal subunit protein uS14.